The sequence spans 234 residues: Endonuclease V (234 aa).

2 residues coordinate Mg(2+): D36 and D104.

The protein belongs to the endonuclease V family. Mg(2+) serves as cofactor.

It localises to the cytoplasm. The enzyme catalyses Endonucleolytic cleavage at apurinic or apyrimidinic sites to products with a 5'-phosphate.. DNA repair enzyme involved in the repair of deaminated bases. Selectively cleaves double-stranded DNA at the second phosphodiester bond 3' to a deoxyinosine leaving behind the intact lesion on the nicked DNA. In Yersinia pseudotuberculosis serotype O:1b (strain IP 31758), this protein is Endonuclease V.